The sequence spans 808 residues: Dynamin-like protein B (808 aa).

The 298-residue stretch at 43 to 340 (FIETPEFVFI…TWRKYLDSVP (298 aa)) folds into the Dynamin-type G domain. A G1 motif region spans residues 53 to 60 (GKDGNGKS). 53–60 (GKDGNGKS) provides a ligand contact to GTP. The G2 motif stretch occupies residues 79–80 (LR). The G3 motif stretch occupies residues 150–153 (EPPS). Residues 150–154 (EPPSV) and 239–242 (NKFH) contribute to the GTP site. The tract at residues 239-242 (NKFH) is G4 motif. Residues 276-279 (PSTA) are G5 motif. Disordered regions lie at residues 536–565 (SSFR…SSSI) and 665–695 (SLNN…NSNH). 2 stretches are compositionally biased toward low complexity: residues 552-565 (SSPS…SSSI) and 665-694 (SLNN…NNSN).

It belongs to the TRAFAC class dynamin-like GTPase superfamily. Dynamin/Fzo/YdjA family.

Its subcellular location is the cytoplasm. It catalyses the reaction GTP + H2O = GDP + phosphate + H(+). In terms of biological role, involved in cytokinesis. May hydrolyze GTP. In Dictyostelium discoideum (Social amoeba), this protein is Dynamin-like protein B (dlpB).